Reading from the N-terminus, the 166-residue chain is Endoribonuclease YbeY (166 aa).

Residues His111, His115, and His121 each contribute to the Zn(2+) site. A disordered region spans residues 140–166 (ELGYPDPYADDESADPPHSDTPSKDHE). Over residues 154-166 (DPPHSDTPSKDHE) the composition is skewed to basic and acidic residues.

It belongs to the endoribonuclease YbeY family. It depends on Zn(2+) as a cofactor.

It is found in the cytoplasm. Single strand-specific metallo-endoribonuclease involved in late-stage 70S ribosome quality control and in maturation of the 3' terminus of the 16S rRNA. This Pseudomonas syringae pv. syringae (strain B728a) protein is Endoribonuclease YbeY.